The following is a 67-amino-acid chain: Brevinin-1CDYa (67 aa).

The signal sequence occupies residues 1-22; that stretch reads MFTLKKSLLLIFFLGTINLSLC. A propeptide spanning residues 23 to 45 is cleaved from the precursor; that stretch reads EEERNADEEERRDDLEERDVEVE. Cys-61 and Cys-67 are joined by a disulfide.

Belongs to the frog skin active peptide (FSAP) family. Brevinin subfamily. In terms of tissue distribution, expressed by the skin glands.

It is found in the secreted. Its function is as follows. Antimicrobial peptide. Has low activity against the Gram-positive bacterium S.aureus (MIC=12.5 uM) and the Gram-negative bacterium E.coli (MIC=25 uM). Has weak hemolytic activity against human erythrocytes. This chain is Brevinin-1CDYa, found in Rana dybowskii (Dybovsky's frog).